A 589-amino-acid chain; its full sequence is Carbonic anhydrase (589 aa).

2 Alpha-carbonic anhydrase domains span residues 59-316 and 321-585; these read HDYN…YEYK and DKYN…YGYN. 258 to 259 lines the substrate pocket; the sequence is TT. Positions 390–589 are catalytic; it reads MQINFGDPPA…TVYGYNGAAA (200 aa). 3 residues coordinate Zn(2+): His420, His422, and His440.

The protein belongs to the alpha-carbonic anhydrase family. Zn(2+) serves as cofactor.

The catalysed reaction is hydrogencarbonate + H(+) = CO2 + H2O. Its function is as follows. Reversible hydration of carbon dioxide. This chain is Carbonic anhydrase (DCA), found in Dunaliella salina (Green alga).